We begin with the raw amino-acid sequence, 488 residues long: Mannitol 2-dehydrogenase (488 aa).

37-48 (IVHVGVGGFHRA) is a binding site for NAD(+).

The protein belongs to the mannitol dehydrogenase family. Monomer.

The enzyme catalyses D-mannitol + NAD(+) = D-fructose + NADH + H(+). Its function is as follows. Catalyzes the NAD(H)-dependent interconversion of D-fructose and D-mannitol in the mannitol metabolic pathway. This is Mannitol 2-dehydrogenase from Aspergillus niger (strain ATCC MYA-4892 / CBS 513.88 / FGSC A1513).